Reading from the N-terminus, the 110-residue chain is Large ribosomal subunit protein uL22 (110 aa).

The protein belongs to the universal ribosomal protein uL22 family. Part of the 50S ribosomal subunit.

This protein binds specifically to 23S rRNA; its binding is stimulated by other ribosomal proteins, e.g. L4, L17, and L20. It is important during the early stages of 50S assembly. It makes multiple contacts with different domains of the 23S rRNA in the assembled 50S subunit and ribosome. Its function is as follows. The globular domain of the protein is located near the polypeptide exit tunnel on the outside of the subunit, while an extended beta-hairpin is found that lines the wall of the exit tunnel in the center of the 70S ribosome. The protein is Large ribosomal subunit protein uL22 of Oleidesulfovibrio alaskensis (strain ATCC BAA-1058 / DSM 17464 / G20) (Desulfovibrio alaskensis).